Reading from the N-terminus, the 608-residue chain is Nuclear protein localization protein 4 homolog (608 aa).

At Ala2 the chain carries N-acetylalanine. The residue at position 179 (Lys179) is an N6-acetyllysine. One can recognise an MPN domain in the interval 226 to 363 (IMFENHTVAD…ICRLSPDGHF (138 aa)). The RanBP2-type zinc finger occupies 580–608 (TSAMWACQHCTFMNQPGTGHCEMCSLPRT).

The protein belongs to the NPL4 family. As to quaternary structure, heterodimer with UFD1. The heterodimer binds ubiquitinated proteins. The heterodimer binds to VCP and inhibits Golgi membrane fusion. Interacts with ZFAND2B; probably through VCP.

It is found in the cytoplasm. It localises to the cytosol. Its subcellular location is the endoplasmic reticulum. The protein resides in the nucleus. The protein operates within protein degradation; proteasomal ubiquitin-dependent pathway. Functionally, the ternary complex containing UFD1, VCP and NPLOC4 binds ubiquitinated proteins and is necessary for the export of misfolded proteins from the ER to the cytoplasm, where they are degraded by the proteasome. The NPLOC4-UFD1-VCP complex regulates spindle disassembly at the end of mitosis and is necessary for the formation of a closed nuclear envelope. Acts as a negative regulator of type I interferon production via the complex formed with VCP and UFD1, which binds to RIGI and recruits RNF125 to promote ubiquitination and degradation of RIGI. This chain is Nuclear protein localization protein 4 homolog (Nploc4), found in Mus musculus (Mouse).